A 379-amino-acid polypeptide reads, in one-letter code: Dual-specificity RNA methyltransferase RlmN (379 aa).

The Proton acceptor role is filled by glutamate 97. Residues 103 to 343 (QGGRGTLCVS…VRTTRGDDID (241 aa)) enclose the Radical SAM core domain. Residues cysteine 110 and cysteine 346 are joined by a disulfide bond. [4Fe-4S] cluster contacts are provided by cysteine 117, cysteine 121, and cysteine 124. S-adenosyl-L-methionine is bound by residues 171–172 (GE), serine 203, 225–227 (SLH), and asparagine 303. Cysteine 346 acts as the S-methylcysteine intermediate in catalysis.

The protein belongs to the radical SAM superfamily. RlmN family. It depends on [4Fe-4S] cluster as a cofactor.

It is found in the cytoplasm. It carries out the reaction adenosine(2503) in 23S rRNA + 2 reduced [2Fe-2S]-[ferredoxin] + 2 S-adenosyl-L-methionine = 2-methyladenosine(2503) in 23S rRNA + 5'-deoxyadenosine + L-methionine + 2 oxidized [2Fe-2S]-[ferredoxin] + S-adenosyl-L-homocysteine. It catalyses the reaction adenosine(37) in tRNA + 2 reduced [2Fe-2S]-[ferredoxin] + 2 S-adenosyl-L-methionine = 2-methyladenosine(37) in tRNA + 5'-deoxyadenosine + L-methionine + 2 oxidized [2Fe-2S]-[ferredoxin] + S-adenosyl-L-homocysteine. Specifically methylates position 2 of adenine 2503 in 23S rRNA and position 2 of adenine 37 in tRNAs. m2A2503 modification seems to play a crucial role in the proofreading step occurring at the peptidyl transferase center and thus would serve to optimize ribosomal fidelity. The chain is Dual-specificity RNA methyltransferase RlmN from Pseudomonas aeruginosa (strain ATCC 15692 / DSM 22644 / CIP 104116 / JCM 14847 / LMG 12228 / 1C / PRS 101 / PAO1).